Here is a 1171-residue protein sequence, read N- to C-terminus: Putative tricorn protease homolog 2 (1171 aa).

Residues 432-498 form a disordered region; it reads AGYPPDAGDE…GSPGTPATAG (67 aa). Composition is skewed to low complexity over residues 444-456 and 466-498; these read AGTA…APDA and IAAG…ATAG. His827 acts as the Charge relay system in catalysis. The segment at 842–941 is PDZ-like; sequence YQRWQGLLGA…RVAVVPLVDE (100 aa). 1002–1004 is a binding site for substrate; it reads AGG. Catalysis depends on Ser1051, which acts as the Nucleophile. 1079-1081 serves as a coordination point for substrate; it reads GMT. Catalysis depends on Glu1109, which acts as the Charge relay system. Positions 1149-1171 are disordered; the sequence is PPATPPGYEAVPDRSRPPLPPRE. A compositionally biased stretch (basic and acidic residues) spans 1159-1171; sequence VPDRSRPPLPPRE.

The protein belongs to the peptidase S41B family.

It localises to the cytoplasm. In terms of biological role, degrades oligopeptides in a sequential manner. The polypeptide is Putative tricorn protease homolog 2 (tri2) (Streptomyces coelicolor (strain ATCC BAA-471 / A3(2) / M145)).